Here is a 686-residue protein sequence, read N- to C-terminus: Zinc finger protein 7 (686 aa).

One can recognise a KRAB domain in the interval 4–76 (VTFGDVAVHF…DLQGAEGTEA (73 aa)). Residues Lys81 and Lys101 each participate in a glycyl lysine isopeptide (Lys-Gly) (interchain with G-Cter in SUMO2) cross-link. Ser126 and Ser138 each carry phosphoserine. 6 consecutive C2H2-type zinc fingers follow at residues 223–245 (SRCQ…NNCH), 250–272 (YECA…QRIH), 278–300 (FKCT…QRIH), 306–328 (YRCE…QRIH), 334–356 (YGCR…QRTH), and 362–384 (YPCK…QRMH). Residues Lys279 and Lys292 each participate in a glycyl lysine isopeptide (Lys-Gly) (interchain with G-Cter in SUMO2) cross-link. Lys393 participates in a covalent cross-link: Glycyl lysine isopeptide (Lys-Gly) (interchain with G-Cter in SUMO2). 9 C2H2-type zinc fingers span residues 413–435 (FKCD…QLIH), 441–463 (YKCN…QRTH), 469–491 (FKCD…QRIH), 497–519 (YVCN…QRIH), 525–547 (YECL…QRVH), 553–575 (YKCN…QIIH), 581–603 (YECS…QRIH), 634–656 (HQCE…QRIH), and 662–684 (YKCN…QKIH).

This sequence belongs to the krueppel C2H2-type zinc-finger protein family.

It localises to the nucleus. In terms of biological role, may be involved in transcriptional regulation. The sequence is that of Zinc finger protein 7 (ZNF7) from Pongo abelii (Sumatran orangutan).